The following is a 1531-amino-acid chain: MPSDFISLLSADLDLESPKSLYSRESVYDLLPKELQLPPSRETSVASMSQTSGGEAGSPPPAVVAADASSAPSSSSMGGACSSFTTSSSPTIYSTSVTDSKAMQVESCSSAVGVSNRGVSEKQLTSNTVQQHPSTPKRHTVLYISPPPEDLLDNSRMSCQDEGCGLESEQSCSMWMEDSPSNFSNMSTSSYNDNTEVPRKSRKRNPKQRPGVKRRDCEESNMDIFDADSAKAPHYVLSQLTTDNKGNSKAGNGTLENQKGTGVKKSPMLCGQYPVKSEGKELKIVVQPETQHRARYLTEGSRGSVKDRTQQGFPTVKLEGHNEPVVLQVFVGNDSGRVKPHGFYQACRVTGRNTTPCKEVDIEGTTVIEVGLDPSNNMTLAVDCVGILKLRNADVEARIGIAGSKKKSTRARLVFRVNIMRKDGSTLTLQTPSSPILCTQPAGVPEILKKSLHSCSVKGEEEVFLIGKNFLKGTKVIFQENVSDENSWKSEAEIDMELFHQNHLIVKVPPYHDQHITLPVSVGIYVVTNAGRSHDVQPFTYTPDPAAAGALNVNVKKEISSPARPCSFEEAMKAMKTTGCNLDKVNIIPNALMTPLIPSSMIKSEDVTPMEVTAEKRSSTIFKTTKSVGSTQQTLENISNIAGNGSFSSPSSSHLPSENEKQQQIQPKAYNPETLTTIQTQDISQPGTFPAVSASSQLPNSDALLQQATQFQTRETQSREILQSDGTVVNLSQLTEASQQQQQSPLQEQAQTLQQQISSNIFPSPNSVSQLQNTIQQLQAGSFTGSTASGSSGSVDLVQQVLEAQQQLSSVLFSAPDGNENVQEQLSADIFQQVSQIQSGVSPGMFSSTEPTVHTRPDNLLPGRAESVHPQSENTLSNQQQQQQQQQQVMESSAAMVMEMQQSICQAAAQIQSELFPSTASANGNLQQSPVYQQTSHMMSALSTNEDMQMQCELFSSPPAVSGNETSTTTTQQVATPGTTMFQTSSSGDGEETGTQAKQIQNSVFQTMVQMQHSGDNQPQVNLFSSTKSMMSVQNSGTQQQGNGLFQQGNEMMSLQSGNFLQQSSHSQAQLFHPQNPIADAQNLSQETQGSLFHSPNPIVHSQTSTTSSEQMQPPMFHSQSTIAVLQGSSVPQDQQSTNIFLSQSPMNNLQTNTVAQEAFFAAPNSISPLQSTSNSEQQAAFQQQAPISHIQTPMLSQEQAQPPQQGLFQPQVALGSLPPNPMPQSQQGTMFQSQHSIVAMQSNSPSQEQQQQQQQQQQQQQQQQQSILFSNQNTMATMASPKQPPPNMIFNPNQNPMANQEQQNQSIFHQQSNMAPMNQEQQPMQFQSQSTVSSLQNPGPTQSESSQTPLFHSSPQIQLVQGSPSSQEQQVTLFLSPASMSALQTSINQQDMQQSPLYSPQNNMPGIQGATSSPQPQATLFHNTAGGTMNQLQNSPGSSQQTSGMFLFGIQNNCSQLLTSGPATLPDQLMAISQPGQPQNEGQPPVTTLLSQQMPENSPLASSINTNQNIEKIDLLVSLQNQGNNLTGSF.

Disordered stretches follow at residues E34–S89 and V114–V141. Over residues R41–T51 the composition is skewed to polar residues. Residues V63 to S89 are compositionally biased toward low complexity. S120 is modified (phosphoserine). K122 carries the N6-acetyllysine modification. A compositionally biased stretch (polar residues) spans K122–S134. S134 is modified (phosphoserine). Phosphothreonine; by CDK5 is present on T135. Residue S155 is modified to Phosphoserine. 2 disordered regions span residues W175 to S220 and T241 to K265. The span at S179 to N192 shows a compositional bias: low complexity. Positions K200–V212 are enriched in basic residues. The segment covering T241–G260 has biased composition (polar residues). One can recognise an RHD domain in the interval K264 to G443. The DNA-binding element occupies R293–G300. Residue K556 forms a Glycyl lysine isopeptide (Lys-Gly) (interchain with G-Cter in SUMO1); alternate linkage. Residue K556 forms a Glycyl lysine isopeptide (Lys-Gly) (interchain with G-Cter in SUMO2); alternate linkage. S561 is modified (phosphoserine). Glycyl lysine isopeptide (Lys-Gly) (interchain with G-Cter in SUMO2) cross-links involve residues K573 and K603. Disordered regions lie at residues N640 to Q666, V841 to E891, P958 to Q996, P1211 to Q1304, A1316 to Q1371, and I1473 to A1502. A compositionally biased stretch (low complexity) spans S646–P656. Composition is skewed to polar residues over residues V841–T852 and H869–N878. Low complexity-rich tracts occupy residues Q879 to Q888 and A960 to T980. 2 stretches are compositionally biased toward polar residues: residues M981–Q996 and P1224–S1247. The segment covering Q1248–Q1266 has biased composition (low complexity). Composition is skewed to polar residues over residues S1267–T1278 and F1291–Q1304. Over residues Q1320–Q1330 the composition is skewed to low complexity. Polar residues predominate over residues S1331–Q1371. Residues Q1475–P1486 show a composition bias toward low complexity. Polar residues predominate over residues V1487–A1502.

Homodimer when bound to DNA, completely encircles its DNA target. Interacts with CIDEC; this interaction is direct and retains NFAT5 in the cytoplasm. Does not bind with Fos and Jun transcription factors. Interacts with DDX5 and DDX17; this interaction leads to DDX5/DDX17 recruitment to LNC2 and S100A4 promoters and NFAT5-mediated DDX5/DDX17-enhanced transactivation. Post-translationally, phosphorylated. Phosphorylated at Thr-135 by CDK5 in response to osmotic stress; this phosphorylation mediates its rapid nuclear localization. In terms of processing, poly-ADP-ribosylated by PARP1 in response to DNA damage, promoting recruitment to sites of R-loop-associated DNA damage. In terms of tissue distribution, widely expressed, with highest levels in skeletal muscle, brain, heart and peripheral blood leukocytes.

The protein resides in the nucleus. Its subcellular location is the cytoplasm. It is found in the chromosome. In terms of biological role, transcription factor involved, among others, in the transcriptional regulation of osmoprotective and inflammatory genes. Binds the DNA consensus sequence 5'-[ACT][AG]TGGAAA[CAT]A[TA][ATC][CA][ATG][GT][GAC][CG][CT]-3'. Mediates the transcriptional response to hypertonicity. Positively regulates the transcription of LCN2 and S100A4 genes; optimal transactivation of these genes requires the presence of DDX5/DDX17. Also involved in the DNA damage response by preventing formation of R-loops; R-loops are composed of a DNA:RNA hybrid and the associated non-template single-stranded DNA. The protein is Nuclear factor of activated T-cells 5 of Homo sapiens (Human).